The chain runs to 105 residues: Met repressor (105 aa).

Belongs to the MetJ family. In terms of assembly, homodimer.

It localises to the cytoplasm. This regulatory protein, when combined with SAM (S-adenosylmethionine) represses the expression of the methionine regulon and of enzymes involved in SAM synthesis. This Actinobacillus succinogenes (strain ATCC 55618 / DSM 22257 / CCUG 43843 / 130Z) protein is Met repressor.